A 179-amino-acid polypeptide reads, in one-letter code: Peptide deformylase (179 aa).

2 residues coordinate Fe cation: Cys102 and His144. The active site involves Glu145. His148 is a Fe cation binding site.

Belongs to the polypeptide deformylase family. It depends on Fe(2+) as a cofactor.

The enzyme catalyses N-terminal N-formyl-L-methionyl-[peptide] + H2O = N-terminal L-methionyl-[peptide] + formate. Removes the formyl group from the N-terminal Met of newly synthesized proteins. Requires at least a dipeptide for an efficient rate of reaction. N-terminal L-methionine is a prerequisite for activity but the enzyme has broad specificity at other positions. The protein is Peptide deformylase of Wolbachia pipientis wMel.